Consider the following 288-residue polypeptide: Lysosomal thioesterase PPT2-B (288 aa).

An N-terminal signal peptide occupies residues 1–20; that stretch reads MRGYLLLLPLLLCLVDNSVS. Cys95 and Cys103 are oxidised to a cystine. Ser97 (nucleophile) is an active-site residue. The N-linked (GlcNAc...) asparagine glycan is linked to Asn143. Cys151 and Cys162 form a disulfide bridge. The N-linked (GlcNAc...) asparagine glycan is linked to Asn192. Active-site residues include Asp214 and His269. N-linked (GlcNAc...) asparagine glycosylation is present at Asn275.

The protein belongs to the palmitoyl-protein thioesterase family.

It localises to the lysosome. It catalyses the reaction hexadecanoyl-CoA + H2O = hexadecanoate + CoA + H(+). The catalysed reaction is S-hexadecanoyl-N-acetylcysteamine + H2O = N-acetylcysteamine + hexadecanoate + H(+). Catalyzes the cleavage of thioester bonds from S-palmitoyl-CoA or S-palmitoyl-N-acetylcysteamine (unbranched structures) but does not have activity against palmitoylcysteine or palmitoylated proteins, branched structures or bulky head groups. Conversely, hydrolyzes both long and short chain fatty acyl-CoA substrate. In Xenopus laevis (African clawed frog), this protein is Lysosomal thioesterase PPT2-B (ppt2-b).